Here is a 227-residue protein sequence, read N- to C-terminus: MNDIILTSQKLYKSYHDGTSRVEVLKGVDLAITKGDRIAIIGPSGSGKSTLLHLLGGLDKPTSGLITLGKVDWQKINEKQRCQLRNQQLGFVYQFHHLLPEFTALENVMMPLLLAGMAVKDAEEKAINMLEQVGLKPRLAHKPAQLSGGERQRVAIARALVHQPHCVLADEPTGNLDEATASKVFDLMLELNKKMNTALVIVTHDQRIAERMDRVLVLHEGSLYARE.

In terms of domain architecture, ABC transporter spans Leu6–Glu227. Residue Gly42–Ser49 participates in ATP binding.

This sequence belongs to the ABC transporter superfamily. Lipoprotein translocase (TC 3.A.1.125) family. In terms of assembly, the complex is composed of two ATP-binding proteins (LolD) and two transmembrane proteins (LolC and LolE).

It localises to the cell inner membrane. In terms of biological role, part of the ABC transporter complex LolCDE involved in the translocation of mature outer membrane-directed lipoproteins, from the inner membrane to the periplasmic chaperone, LolA. Responsible for the formation of the LolA-lipoprotein complex in an ATP-dependent manner. The sequence is that of Lipoprotein-releasing system ATP-binding protein LolD from Legionella pneumophila (strain Paris).